The chain runs to 312 residues: Aspartate carbamoyltransferase catalytic subunit (312 aa).

Carbamoyl phosphate-binding residues include Arg-58 and Thr-59. Lys-86 lines the L-aspartate pocket. Residues Arg-108, His-136, and Gln-139 each coordinate carbamoyl phosphate. Residues Arg-169 and Arg-223 each coordinate L-aspartate. Residues Gly-264 and Pro-265 each contribute to the carbamoyl phosphate site.

This sequence belongs to the aspartate/ornithine carbamoyltransferase superfamily. ATCase family. Heterododecamer (2C3:3R2) of six catalytic PyrB chains organized as two trimers (C3), and six regulatory PyrI chains organized as three dimers (R2).

The catalysed reaction is carbamoyl phosphate + L-aspartate = N-carbamoyl-L-aspartate + phosphate + H(+). The protein operates within pyrimidine metabolism; UMP biosynthesis via de novo pathway; (S)-dihydroorotate from bicarbonate: step 2/3. Functionally, catalyzes the condensation of carbamoyl phosphate and aspartate to form carbamoyl aspartate and inorganic phosphate, the committed step in the de novo pyrimidine nucleotide biosynthesis pathway. The protein is Aspartate carbamoyltransferase catalytic subunit of Heliobacterium modesticaldum (strain ATCC 51547 / Ice1).